A 108-amino-acid polypeptide reads, in one-letter code: Parvalbumin beta 2 (108 aa).

Ser2 carries the N-acetylserine modification. EF-hand domains lie at Lys38 to Ser73 and Leu77 to Gly108. Residues Asp51, Asp53, Ser55, Phe57, Glu59, Glu62, Asp90, Asp92, Asp94, Met96, and Glu101 each contribute to the Ca(2+) site.

Belongs to the parvalbumin family.

In terms of biological role, in muscle, parvalbumin is thought to be involved in relaxation after contraction. It binds two calcium ions. The polypeptide is Parvalbumin beta 2 (Salmo salar (Atlantic salmon)).